The sequence spans 301 residues: Protein ARMCX6 (301 aa).

Residues 1–6 (MGRARE) form a mitochondrion outer membrane (MOM)-targeting sequence region. Topologically, residues 1-7 (MGRAREM) are mitochondrial intermembrane. A helical; Signal-anchor transmembrane segment spans residues 8 to 25 (GWMAAGLMIGAGACYCMY). The tract at residues 26–36 (KLTMGRSEGNE) is mitochondrion outer membrane (MOM)-targeting sequence. Over 26 to 301 (KLTMGRSEGN…REMLVEAISP (276 aa)) the chain is Cytoplasmic. The disordered stretch occupies residues 69–101 (WSEDGDWDEPGAPGGTEDRRSGGGKANRAHPIK).

Belongs to the eutherian X-chromosome-specific Armcx family. As to expression, highly expressed in the developing neural tissues, neural crest derivatives and hind limbs. Also widely expressed in the adult nervous tissue, especially in the forebrain, including the cerebral cortex, hippocampus and thalamus.

It is found in the mitochondrion. The protein localises to the mitochondrion outer membrane. May regulate the dynamics and distribution of mitochondria in neural cells. The chain is Protein ARMCX6 (Armcx6) from Mus musculus (Mouse).